The sequence spans 425 residues: Histidine--tRNA ligase (425 aa).

It belongs to the class-II aminoacyl-tRNA synthetase family. In terms of assembly, homodimer.

The protein resides in the cytoplasm. The enzyme catalyses tRNA(His) + L-histidine + ATP = L-histidyl-tRNA(His) + AMP + diphosphate + H(+). This chain is Histidine--tRNA ligase, found in Erwinia tasmaniensis (strain DSM 17950 / CFBP 7177 / CIP 109463 / NCPPB 4357 / Et1/99).